A 289-amino-acid polypeptide reads, in one-letter code: Ribosomal RNA small subunit methyltransferase I (289 aa).

Belongs to the methyltransferase superfamily. RsmI family.

The protein resides in the cytoplasm. It catalyses the reaction cytidine(1402) in 16S rRNA + S-adenosyl-L-methionine = 2'-O-methylcytidine(1402) in 16S rRNA + S-adenosyl-L-homocysteine + H(+). In terms of biological role, catalyzes the 2'-O-methylation of the ribose of cytidine 1402 (C1402) in 16S rRNA. The chain is Ribosomal RNA small subunit methyltransferase I from Halalkalibacterium halodurans (strain ATCC BAA-125 / DSM 18197 / FERM 7344 / JCM 9153 / C-125) (Bacillus halodurans).